The sequence spans 569 residues: Protein angel homolog 2 (569 aa).

Disordered stretches follow at residues 1–22, 63–92, and 109–155; these read MRKG…GVSP, LQHP…WSSW, and GLME…WLRN. A compositionally biased stretch (polar residues) spans 63–72; the sequence is LQHPSSSFST. Over residues 139–150 the composition is skewed to low complexity; it reads PPKGSRSPKGSP.

Belongs to the CCR4/nocturin family.

The polypeptide is Protein angel homolog 2 (angel2) (Danio rerio (Zebrafish)).